Consider the following 426-residue polypeptide: Putative phosphate permease CT_962 (426 aa).

11 helical membrane-spanning segments follow: residues 1–21 (MWLL…NIGA), 37–57 (LTLK…AVLL), 83–103 (VFGM…ASFC), 104–124 (GWPV…GIIL), 140–160 (VSWL…FSFI), 183–203 (AIII…APVI), 207–227 (PALR…IWGI), 260–280 (LIVE…MSFA), 309–329 (VLLV…ATWG), 365–385 (LGFP…IGFA), and 399–419 (IVLS…VFFL).

This sequence belongs to the inorganic phosphate transporter (PiT) (TC 2.A.20) family.

The protein localises to the cell membrane. Functionally, potential transporter for phosphate. The chain is Putative phosphate permease CT_962 from Chlamydia trachomatis serovar D (strain ATCC VR-885 / DSM 19411 / UW-3/Cx).